Reading from the N-terminus, the 292-residue chain is Probable ABC transporter permease protein YurN (292 aa).

6 consecutive transmembrane segments (helical) span residues 7–27 (IIPY…YIPI), 70–90 (VLYA…LAAV), 106–126 (VFFL…DFIY), 160–180 (VIFV…IVSI), 215–235 (FVAV…PYIL), and 260–280 (MMGY…ALSL). In terms of domain architecture, ABC transmembrane type-1 spans 66–282 (LTNNVLYAVI…IITLALSLMQ (217 aa)).

The protein belongs to the binding-protein-dependent transport system permease family. MalFG subfamily.

It is found in the cell membrane. Functionally, probably part of the binding-protein-dependent transport system YurMNO. Probably responsible for the translocation of the substrate across the membrane. This chain is Probable ABC transporter permease protein YurN (yurN), found in Bacillus subtilis (strain 168).